Reading from the N-terminus, the 126-residue chain is UPF0047 protein AF_2050 (126 aa).

This sequence belongs to the UPF0047 family.

This chain is UPF0047 protein AF_2050, found in Archaeoglobus fulgidus (strain ATCC 49558 / DSM 4304 / JCM 9628 / NBRC 100126 / VC-16).